The following is a 404-amino-acid chain: Riboflavin biosynthesis protein RibBA (404 aa).

Residues 1–204 are DHBP synthase; it reads MEELKLNTIE…IRDLIAYRLK (204 aa). Residues 30-31, Asp35, 143-147, and Glu167 each bind D-ribulose 5-phosphate; these read RE and RAGHT. Glu31 contributes to the Mg(2+) binding site. His146 contacts Mg(2+). Positions 205–404 are GTP cyclohydrolase II; sequence QESLVEKGVE…RMGHTLHFNK (200 aa). A GTP-binding site is contributed by 255–259; sequence RVHSS. Positions 260, 271, and 273 each coordinate Zn(2+). GTP is bound by residues Gln276, 298-300, and Thr320; that span reads EGR. Residue Asp332 is the Proton acceptor; for GTP cyclohydrolase activity of the active site. Arg334 serves as the catalytic Nucleophile; for GTP cyclohydrolase activity. Residues Thr355 and Lys360 each coordinate GTP.

It in the N-terminal section; belongs to the DHBP synthase family. The protein in the C-terminal section; belongs to the GTP cyclohydrolase II family. Mg(2+) is required as a cofactor. The cofactor is Mn(2+). It depends on Zn(2+) as a cofactor.

It carries out the reaction D-ribulose 5-phosphate = (2S)-2-hydroxy-3-oxobutyl phosphate + formate + H(+). It catalyses the reaction GTP + 4 H2O = 2,5-diamino-6-hydroxy-4-(5-phosphoribosylamino)-pyrimidine + formate + 2 phosphate + 3 H(+). The protein operates within cofactor biosynthesis; riboflavin biosynthesis; 2-hydroxy-3-oxobutyl phosphate from D-ribulose 5-phosphate: step 1/1. It functions in the pathway cofactor biosynthesis; riboflavin biosynthesis; 5-amino-6-(D-ribitylamino)uracil from GTP: step 1/4. Its function is as follows. Catalyzes the conversion of D-ribulose 5-phosphate to formate and 3,4-dihydroxy-2-butanone 4-phosphate. Functionally, catalyzes the conversion of GTP to 2,5-diamino-6-ribosylamino-4(3H)-pyrimidinone 5'-phosphate (DARP), formate and pyrophosphate. The sequence is that of Riboflavin biosynthesis protein RibBA from Phocaeicola vulgatus (strain ATCC 8482 / DSM 1447 / JCM 5826 / CCUG 4940 / NBRC 14291 / NCTC 11154) (Bacteroides vulgatus).